Consider the following 137-residue polypeptide: Crustacean calcium-binding protein 23 (137 aa).

EF-hand domains follow at residues 27 to 48 (RDSSWTLSKEELSRGVSQFGLD), 62 to 97 (EKKAAVEAAFKHLDKTGDGVVTVEDIKGVYSAKVVK), and 100 to 135 (ATEEEILKKFLNMFESSTSVDGKVTKKEFLDYYSGL).

Monomer or disulfide-linked dimers.

Functionally, possibly acts as a regulatory protein and not as a calcium buffer or transport protein. The sequence is that of Crustacean calcium-binding protein 23 from Homarus americanus (American lobster).